The chain runs to 349 residues: DNA polymerase IV (349 aa).

The UmuC domain occupies 3–187; it reads VLFVDFDYFF…LDISKVPGVG (185 aa). Residues aspartate 7 and aspartate 105 each coordinate Mg(2+). The active site involves glutamate 106.

It belongs to the DNA polymerase type-Y family. In terms of assembly, monomer. Requires Mg(2+) as cofactor.

The protein localises to the cytoplasm. It catalyses the reaction DNA(n) + a 2'-deoxyribonucleoside 5'-triphosphate = DNA(n+1) + diphosphate. In terms of biological role, poorly processive, error-prone DNA polymerase involved in untargeted mutagenesis. Copies undamaged DNA at stalled replication forks, which arise in vivo from mismatched or misaligned primer ends. These misaligned primers can be extended by PolIV. Exhibits no 3'-5' exonuclease (proofreading) activity. May be involved in translesional synthesis. This chain is DNA polymerase IV, found in Metallosphaera sedula (strain ATCC 51363 / DSM 5348 / JCM 9185 / NBRC 15509 / TH2).